The sequence spans 93 residues: Chaperone NapD (93 aa).

This sequence belongs to the NapD family. Interacts with the cytoplasmic NapA precursor.

It localises to the cytoplasm. Functionally, chaperone for NapA, the catalytic subunit of the periplasmic nitrate reductase. It binds directly and specifically to the twin-arginine signal peptide of NapA, preventing premature interaction with the Tat translocase and premature export. This Haemophilus influenzae (strain ATCC 51907 / DSM 11121 / KW20 / Rd) protein is Chaperone NapD.